The following is a 358-amino-acid chain: Heme A synthase (358 aa).

8 helical membrane-spanning segments follow: residues Ile22 to Ala42, Val107 to Lys127, Ile133 to Trp153, Leu172 to Gly192, Phe208 to Gly228, Phe269 to Val289, Ala302 to His322, and Val324 to Val344. Residue His271 coordinates heme. Residue His332 participates in heme binding.

Belongs to the COX15/CtaA family. Type 2 subfamily. Interacts with CtaB. Requires heme b as cofactor.

It is found in the cell membrane. It carries out the reaction Fe(II)-heme o + 2 A + H2O = Fe(II)-heme a + 2 AH2. It functions in the pathway porphyrin-containing compound metabolism; heme A biosynthesis; heme A from heme O: step 1/1. In terms of biological role, catalyzes the conversion of heme O to heme A by two successive hydroxylations of the methyl group at C8. The first hydroxylation forms heme I, the second hydroxylation results in an unstable dihydroxymethyl group, which spontaneously dehydrates, resulting in the formyl group of heme A. The protein is Heme A synthase of Bartonella tribocorum (strain CIP 105476 / IBS 506).